Here is a 591-residue protein sequence, read N- to C-terminus: Aspartate--tRNA ligase (591 aa).

L-aspartate is bound at residue glutamate 172. The interval 196–199 (QLFK) is aspartate. Arginine 218 is a binding site for L-aspartate. ATP-binding positions include 218 to 220 (RDE) and glutamine 227. Histidine 449 serves as a coordination point for L-aspartate. Position 483 (glutamate 483) interacts with ATP. Residue arginine 490 coordinates L-aspartate. An ATP-binding site is contributed by 535–538 (GLDR).

The protein belongs to the class-II aminoacyl-tRNA synthetase family. Type 1 subfamily. In terms of assembly, homodimer.

The protein resides in the cytoplasm. It carries out the reaction tRNA(Asp) + L-aspartate + ATP = L-aspartyl-tRNA(Asp) + AMP + diphosphate. Its function is as follows. Catalyzes the attachment of L-aspartate to tRNA(Asp) in a two-step reaction: L-aspartate is first activated by ATP to form Asp-AMP and then transferred to the acceptor end of tRNA(Asp). The chain is Aspartate--tRNA ligase from Actinobacillus pleuropneumoniae serotype 5b (strain L20).